A 322-amino-acid chain; its full sequence is Lipoyl synthase (322 aa).

[4Fe-4S] cluster is bound by residues Cys-69, Cys-74, Cys-80, Cys-95, Cys-99, Cys-102, and Ser-309. The 218-residue stretch at 81 to 298 (FNHGTATFMI…KEIALELGFT (218 aa)) folds into the Radical SAM core domain.

Belongs to the radical SAM superfamily. Lipoyl synthase family. It depends on [4Fe-4S] cluster as a cofactor.

It is found in the cytoplasm. It carries out the reaction [[Fe-S] cluster scaffold protein carrying a second [4Fe-4S](2+) cluster] + N(6)-octanoyl-L-lysyl-[protein] + 2 oxidized [2Fe-2S]-[ferredoxin] + 2 S-adenosyl-L-methionine + 4 H(+) = [[Fe-S] cluster scaffold protein] + N(6)-[(R)-dihydrolipoyl]-L-lysyl-[protein] + 4 Fe(3+) + 2 hydrogen sulfide + 2 5'-deoxyadenosine + 2 L-methionine + 2 reduced [2Fe-2S]-[ferredoxin]. It functions in the pathway protein modification; protein lipoylation via endogenous pathway; protein N(6)-(lipoyl)lysine from octanoyl-[acyl-carrier-protein]: step 2/2. Catalyzes the radical-mediated insertion of two sulfur atoms into the C-6 and C-8 positions of the octanoyl moiety bound to the lipoyl domains of lipoate-dependent enzymes, thereby converting the octanoylated domains into lipoylated derivatives. This is Lipoyl synthase from Photobacterium profundum (strain SS9).